The following is a 593-amino-acid chain: AT-rich interactive domain-containing protein 3A (593 aa).

A disordered region spans residues 14–222 (QQRARQELEA…PQLQPPDHGD (209 aa)). Positions 41–53 (AAPDEDREPESAR) are enriched in basic and acidic residues. Low complexity predominate over residues 54-87 (MQRAQMAALAAMRAAAAGLGHPASPGGSEDGPPG). 3 positions are modified to phosphoserine: Ser77, Ser81, and Ser88. The residue at position 98 (Thr98) is a Phosphothreonine. Phosphoserine occurs at positions 101 and 119. The span at 104-127 (RGREGPGEEHFEDMASDEDMKPKW) shows a compositional bias: basic and acidic residues. The segment at 119-156 (SDEDMKPKWEEEEMEEDLGEDEEEEEEDYEDEEEEEDE) is acidic. The span at 128–158 (EEEEMEEDLGEDEEEEEEDYEDEEEEEDEEG) shows a compositional bias: acidic residues. The ARID domain maps to 238-330 (DPKRKEFLDD…YLYPYECEKR (93 aa)). Phosphoserine is present on residues Ser353 and Ser362. Glycyl lysine isopeptide (Lys-Gly) (interchain with G-Cter in SUMO2) cross-links involve residues Lys398, Lys399, Lys452, and Lys462. The 98-residue stretch at 444–541 (AALEQLREKL…GVLFAQPPAP (98 aa)) folds into the REKLES domain. An important for nuclear localization region spans residues 445–488 (ALEQLREKLESAEPPEKKMALVADEQQRLMQRALQQNFLAMAAQ). Positions 490 to 513 (PMSIRINSQASESRQDSAVNLTGT) are homodimerization. 2 disordered regions span residues 497–516 (SQAS…TNGS) and 539–593 (PAPT…NSLP). Residues 537-557 (QPPAPTPTSAPNKGGGGGGGS) form an important for cytoplasmic localization region. Positions 549–576 (KGGGGGGGSSSNAGGRGGNTGTSGGQAG) are enriched in gly residues. Residues 580–593 (LSTPSTSTSNNSLP) are compositionally biased toward low complexity.

As to quaternary structure, homodimer. Heterodimer with ARID3B. Interacts with E2F1. Interacts with GTF2I and BTK. Widely expressed, with highest expression in skeletal muscle, thalamus, and colon.

Its subcellular location is the nucleus. The protein localises to the cytoplasm. Functionally, transcription factor which may be involved in the control of cell cycle progression by the RB1/E2F1 pathway and in B-cell differentiation. This Homo sapiens (Human) protein is AT-rich interactive domain-containing protein 3A (ARID3A).